The chain runs to 344 residues: MNSSKPLDLSARNAARARQAVLTKPPGSLGQLEELACRFAAWQGRAQPEDLRPAITVFAADHGVTVEGVSAFPSAVTTEMVRNFANGGAAICVLARALDARLEVVDVGVAGDVSALPIVHAKVRPGSHNLARQAAMSAEETEAALEAGRAAARRAVEAGANLLVAGDMGIGNTTASAALICRLTGAAPELVVGRGTGVDDAGLANKRRAVKTALARVAWENLSGLDTLSELGGLEIAAIAGFYLEGARLGVPSLVDGFIASAAALCAKTIDPSLHDWLLASHRSAESGHELALTALQLHPLVDLGMRLGEGSGAAVCVPLLQLAVKLHNGMATFDEAGVSGKSA.

The active-site Proton acceptor is E310.

The protein belongs to the CobT family.

The catalysed reaction is 5,6-dimethylbenzimidazole + nicotinate beta-D-ribonucleotide = alpha-ribazole 5'-phosphate + nicotinate + H(+). It participates in nucleoside biosynthesis; alpha-ribazole biosynthesis; alpha-ribazole from 5,6-dimethylbenzimidazole: step 1/2. Its function is as follows. Catalyzes the synthesis of alpha-ribazole-5'-phosphate from nicotinate mononucleotide (NAMN) and 5,6-dimethylbenzimidazole (DMB). The sequence is that of Nicotinate-nucleotide--dimethylbenzimidazole phosphoribosyltransferase from Chromobacterium violaceum (strain ATCC 12472 / DSM 30191 / JCM 1249 / CCUG 213 / NBRC 12614 / NCIMB 9131 / NCTC 9757 / MK).